We begin with the raw amino-acid sequence, 23 residues long: SV40 early leader protein (23 aa).

The segment at 1–23 is disordered; it reads MQRPRPPRPLSYSRSSEEAFLEA.

The protein belongs to the polyomavirus early leader protein family.

Functionally, may play a role in the lytic cycle. This Macaca (macaques) protein is SV40 early leader protein.